The sequence spans 282 residues: NADPH-dependent 7-cyano-7-deazaguanine reductase (282 aa).

88-90 provides a ligand contact to substrate; it reads IES. Residue 90–91 participates in NADPH binding; sequence SK. The active-site Thioimide intermediate is cysteine 190. Aspartate 197 serves as the catalytic Proton donor. Residue 229-230 participates in substrate binding; that stretch reads HE. 258 to 259 serves as a coordination point for NADPH; sequence RG.

The protein belongs to the GTP cyclohydrolase I family. QueF type 2 subfamily. In terms of assembly, homodimer.

The protein resides in the cytoplasm. The enzyme catalyses 7-aminomethyl-7-carbaguanine + 2 NADP(+) = 7-cyano-7-deazaguanine + 2 NADPH + 3 H(+). The protein operates within tRNA modification; tRNA-queuosine biosynthesis. Its function is as follows. Catalyzes the NADPH-dependent reduction of 7-cyano-7-deazaguanine (preQ0) to 7-aminomethyl-7-deazaguanine (preQ1). This chain is NADPH-dependent 7-cyano-7-deazaguanine reductase, found in Escherichia coli O9:H4 (strain HS).